Reading from the N-terminus, the 507-residue chain is Cytochrome P450 monooxygenase helB3 (507 aa).

The signal sequence occupies residues 1 to 25; it reads MAVATLISILFAVLALRLCYLLIHA. Asn-111, Asn-206, and Asn-339 each carry an N-linked (GlcNAc...) asparagine glycan. Cys-435 lines the heme pocket.

The protein belongs to the cytochrome P450 family. Heme is required as a cofactor.

It participates in mycotoxin biosynthesis. In terms of biological role, cytochrome P450 monooxygenase; part of the gene cluster that mediates the biosynthesis of helvolic acid, an antibacterial nortriterpenoid. Protostadienol synthase helA cyclizes (3S)-oxidosqualene to (17Z)-protosta-17(20),24-dien-3-beta-ol (protostadienol). The synthesis of protostadienol is followed by several steps of monooxygenation, dehydrogenation, and acyl transfer to yield the final helvolic acid. Following the cyclization to the tetracyclic protostadienol by helA, cytochrome P450 monooxygenases helB1-mediated and helB2-mediated oxidation at C-4 and C-16, acyltransferase helD2-dependent acetylation of 16-OH, oxidation of C-21 by cytochrome P450 monooxygenase helB4, and short chain dehydrogenase helC-dependent oxidative decarboxylation yield the fusidane skeleton. This intermediate is further modified in three additional steps mediated by the cytochrome P450 monooxygenase helB3, the acyltransferase helD1, and the 3-ketosteroid 1-dehydrogenase helE to give helvolic acid. Compared with the late stages in the biosynthesis of helvolic acid, enzymes involved in the early stage modifications act in a relatively strict order. The hydroxylation of C-16 by helB1 and subsequent acetylation by helD2 should occur before the helB3-mediated oxidation of C-21. C-4 demethylation in fusidane-type antibiotics proceeds in an unusual manner though it is also achieved by oxidative decarboxylation. The methyl group at C-4 beta position is oxidized by helB1 and subsequently removed by the short chain dehydrogenase helC. This is Cytochrome P450 monooxygenase helB3 from Aspergillus fumigatus (strain ATCC MYA-4609 / CBS 101355 / FGSC A1100 / Af293) (Neosartorya fumigata).